A 360-amino-acid chain; its full sequence is Protein Wnt-5b (360 aa).

A signal peptide spans 1 to 16; it reads MTPILRLLLLSSLLSC. The cysteines at positions 84 and 95 are disulfide-linked. N-linked (GlcNAc...) asparagine glycosylation is found at Asn-94 and Asn-100. Disulfide bonds link Cys-134-Cys-142, Cys-144-Cys-162, Cys-218-Cys-232, Cys-220-Cys-227, Cys-289-Cys-320, Cys-305-Cys-315, Cys-319-Cys-359, Cys-335-Cys-350, Cys-337-Cys-347, and Cys-342-Cys-343. Residue Ser-224 is the site of O-palmitoleoyl serine; by PORCN attachment. Residues Asn-292 and Asn-306 are each glycosylated (N-linked (GlcNAc...) asparagine).

This sequence belongs to the Wnt family. In terms of processing, palmitoleoylation is required for efficient binding to frizzled receptors. Depalmitoleoylation leads to Wnt signaling pathway inhibition.

It localises to the secreted. Its subcellular location is the extracellular space. The protein resides in the extracellular matrix. In terms of biological role, ligand for members of the frizzled family of seven transmembrane receptors. Probable developmental protein. May be a signaling molecule which affects the development of discrete regions of tissues. Is likely to signal over only few cell diameters. This Xenopus laevis (African clawed frog) protein is Protein Wnt-5b (wnt5b).